The following is a 456-amino-acid chain: Chromosomal replication initiator protein DnaA 1 (456 aa).

The interval 1–68 (MRAWEEFLLL…KASLINNNGK (68 aa)) is domain I, interacts with DnaA modulators. The domain II stretch occupies residues 68-101 (KPIRVRVTSLDKSTPFKETQIQQEKTAYFTMKYG). The interval 102–320 (DIDPNMSFAN…HALTTLAKRV (219 aa)) is domain III, AAA+ region. ATP is bound by residues Ser150, Gly152, Lys153, and Thr154. Residues 321-456 (AYKKLSHQML…AYQSLDFIED (136 aa)) form a domain IV, binds dsDNA region.

The protein belongs to the DnaA family. As to quaternary structure, oligomerizes as a right-handed, spiral filament on DNA at oriC.

Its subcellular location is the cytoplasm. Its function is as follows. Plays an essential role in the initiation and regulation of chromosomal replication. ATP-DnaA binds to the origin of replication (oriC) to initiate formation of the DNA replication initiation complex once per cell cycle. Binds the DnaA box (a 9 base pair repeat at the origin) and separates the double-stranded (ds)DNA. Forms a right-handed helical filament on oriC DNA; dsDNA binds to the exterior of the filament while single-stranded (ss)DNA is stabiized in the filament's interior. The ATP-DnaA-oriC complex binds and stabilizes one strand of the AT-rich DNA unwinding element (DUE), permitting loading of DNA polymerase. After initiation quickly degrades to an ADP-DnaA complex that is not apt for DNA replication. Binds acidic phospholipids. This Chlamydia trachomatis serovar D (strain ATCC VR-885 / DSM 19411 / UW-3/Cx) protein is Chromosomal replication initiator protein DnaA 1.